The primary structure comprises 301 residues: MATPTESELASPIPQTNPGSYEELHRKARDVFPTCFEGAKLMVNKGLSSHFQVSHTLSLSAMNTGYRFGATYVGTNQVGPAEAYPILLGDTDVNGNTTATILHQLGIYRTKLQGQIQQGKLAGAQATIERKGRLSTLGLTLANIDLVNEAGILVGQFLRRLTPRLDVGTEMVYQYGKNIPGGQISVLSYAARYTANHFIAAATLGASGVHLTYYHKQNENLAFGVEFECNANVGEAVTTLAYQTELPEEGVTMRASFDTNWTVGGVFEKRLSQQLPFTLALSGTLNHVKAAGKFGIGLIIG.

Residues 1–19 show a composition bias toward polar residues; it reads MATPTESELASPIPQTNPG. The disordered stretch occupies residues 1-20; that stretch reads MATPTESELASPIPQTNPGS.

Belongs to the Tom40 family. Forms part of the preprotein translocase complex of the outer mitochondrial membrane (TOM complex). Interacts with mitochondrial targeting sequences. In terms of tissue distribution, ubiquitously expressed, but highly expressed in the pharyngeal muscles, the nerve ring, the intestine, gonadal sheath and in the tail hypodermis.

Its subcellular location is the mitochondrion outer membrane. In terms of biological role, channel-forming protein essential for import of protein precursors into mitochondria. Specifically required for nnt-1 accumulation in the mitochondria and may be involved in the secretion of daf-28/insulin from the mitochondria. Required for embryonic and larval development. The chain is Mitochondrial import receptor subunit TOM40 homolog from Caenorhabditis elegans.